The chain runs to 491 residues: Sodium-dependent glucose transporter 1 (491 aa).

A run of 11 helical transmembrane segments spans residues 26-46 (FIFV…GILF), 52-72 (HLLL…VPWC), 81-101 (VMSV…IIIL), 119-139 (FALG…FLPL), 165-185 (LSYI…FILF), 210-230 (AVIF…VAYG), 255-275 (LFWG…TCLY), 277-297 (GTML…LVLF), 303-323 (LLWV…PSGF), 338-358 (SLFV…VGYL), and 365-385 (FPVL…LFPV). 2 disordered regions span residues 397 to 425 (AQYN…DEAQ) and 438 to 491 (NDQM…EKND). The span at 416–425 (MEEEDEDEAQ) shows a compositional bias: acidic residues. A compositionally biased stretch (polar residues) spans 440 to 458 (QMKNSVTVISEDTPGNSAP).

Belongs to the major facilitator superfamily.

Its subcellular location is the apical cell membrane. Its function is as follows. May function as a sodium-dependent glucose transporter. Potential channels for urea in the inner medulla of kidney. This Xenopus laevis (African clawed frog) protein is Sodium-dependent glucose transporter 1 (mfsd4b).